A 375-amino-acid chain; its full sequence is DNA replication and repair protein RecF (375 aa).

30-37 contributes to the ATP binding site; that stretch reads GDNAQGKT.

Belongs to the RecF family.

It is found in the cytoplasm. In terms of biological role, the RecF protein is involved in DNA metabolism; it is required for DNA replication and normal SOS inducibility. RecF binds preferentially to single-stranded, linear DNA. It also seems to bind ATP. The protein is DNA replication and repair protein RecF of Symbiobacterium thermophilum (strain DSM 24528 / JCM 14929 / IAM 14863 / T).